A 355-amino-acid chain; its full sequence is LIM/homeobox protein lim-4 (355 aa).

2 consecutive LIM zinc-binding domains span residues 96-155 (VICT…THVT) and 166-228 (PKCA…LVEG). A DNA-binding region (homeobox) is located at residues 239–298 (TKRVRTTFAEDQLSVLQTYFNRDSNPDGADLEKIASMTGLSKRVTQVWFQNSRARQKKWH). A disordered region spans residues 291–336 (RARQKKWHQKSEGDNGDSQRSSVGPSSPSQKSDSSSEMMYPTSVTT). Positions 306–326 (GDSQRSSVGPSSPSQKSDSSS) are enriched in low complexity.

As to quaternary structure, interacts with transcription factor sox-2. Expressed in the AWB sensory neurons and in one RME motor neuron (RMEV), two RMD motor neurons (RMDL and RMDR), the RID, RIV, SAA and SIA interneurons and the SMB sensory/inter/motor neurons.

The protein resides in the nucleus. Transcription factor that binds to the promoter of target genes. Regulates genes involved in serotonin synthesis and release in serotonergic ADF neurons. Involved in specification of neuron cell fate, olfactory receptor expression, locomotion, and foraging behavior. Required in AWB olfactory neurons to repress AWC cell fate and promote the AWB cell fate during early development. Cooperates with additional factors to direct the differentiation of the olfactory neurons, functioning with the transcription factor sox-2 to suppress AWC terminal differentiation and promote AWB neuron differentiation. Involved in regulating terminal specification and maintenance of the SMB sensory/inter/motor neurons. Plays a role in regulation of RID motor neuron differentiation, but is dispensable for motor axon outgrowth in the dorsal nerve cord. May regulate its own expression. This Caenorhabditis elegans protein is LIM/homeobox protein lim-4.